The chain runs to 189 residues: Transcription factor FapR (189 aa).

The protein belongs to the FapR family.

Its function is as follows. Transcriptional factor involved in regulation of membrane lipid biosynthesis by repressing genes involved in fatty acid and phospholipid metabolism. The chain is Transcription factor FapR from Listeria innocua serovar 6a (strain ATCC BAA-680 / CLIP 11262).